Here is a 615-residue protein sequence, read N- to C-terminus: Dihydroxy-acid dehydratase (615 aa).

Mg(2+) is bound at residue Asp81. Residue Cys122 coordinates [2Fe-2S] cluster. Positions 123 and 124 each coordinate Mg(2+). Lys124 bears the N6-carboxylysine mark. Residue Cys195 coordinates [2Fe-2S] cluster. Glu491 is a binding site for Mg(2+). Ser517 (proton acceptor) is an active-site residue.

It belongs to the IlvD/Edd family. Homodimer. The cofactor is [2Fe-2S] cluster. Requires Mg(2+) as cofactor.

It carries out the reaction (2R)-2,3-dihydroxy-3-methylbutanoate = 3-methyl-2-oxobutanoate + H2O. The catalysed reaction is (2R,3R)-2,3-dihydroxy-3-methylpentanoate = (S)-3-methyl-2-oxopentanoate + H2O. It participates in amino-acid biosynthesis; L-isoleucine biosynthesis; L-isoleucine from 2-oxobutanoate: step 3/4. It functions in the pathway amino-acid biosynthesis; L-valine biosynthesis; L-valine from pyruvate: step 3/4. Functions in the biosynthesis of branched-chain amino acids. Catalyzes the dehydration of (2R,3R)-2,3-dihydroxy-3-methylpentanoate (2,3-dihydroxy-3-methylvalerate) into 2-oxo-3-methylpentanoate (2-oxo-3-methylvalerate) and of (2R)-2,3-dihydroxy-3-methylbutanoate (2,3-dihydroxyisovalerate) into 2-oxo-3-methylbutanoate (2-oxoisovalerate), the penultimate precursor to L-isoleucine and L-valine, respectively. The sequence is that of Dihydroxy-acid dehydratase from Novosphingobium aromaticivorans (strain ATCC 700278 / DSM 12444 / CCUG 56034 / CIP 105152 / NBRC 16084 / F199).